A 327-amino-acid polypeptide reads, in one-letter code: ATPase ASNA1 homolog (327 aa).

26–33 (KGGVGKTT) lines the ATP pocket. Aspartate 57 is a catalytic residue. ATP contacts are provided by glutamate 238 and asparagine 265. Zn(2+)-binding residues include cysteine 274 and cysteine 277.

The protein belongs to the arsA ATPase family. In terms of assembly, homodimer.

Its subcellular location is the cytoplasm. It localises to the endoplasmic reticulum. In terms of biological role, ATPase required for the post-translational delivery of tail-anchored (TA) proteins to the endoplasmic reticulum. Recognizes and selectively binds the transmembrane domain of TA proteins in the cytosol. This complex then targets to the endoplasmic reticulum by membrane-bound receptors, where the tail-anchored protein is released for insertion. This process is regulated by ATP binding and hydrolysis. ATP binding drives the homodimer towards the closed dimer state, facilitating recognition of newly synthesized TA membrane proteins. ATP hydrolysis is required for insertion. Subsequently, the homodimer reverts towards the open dimer state, lowering its affinity for the membrane-bound receptor, and returning it to the cytosol to initiate a new round of targeting. This Entamoeba histolytica (strain ATCC 30459 / HM-1:IMSS / ABRM) protein is ATPase ASNA1 homolog.